A 248-amino-acid chain; its full sequence is DNA repair protein RecO (248 aa).

This sequence belongs to the RecO family.

Involved in DNA repair and RecF pathway recombination. This Streptomyces griseus subsp. griseus (strain JCM 4626 / CBS 651.72 / NBRC 13350 / KCC S-0626 / ISP 5235) protein is DNA repair protein RecO.